Consider the following 95-residue polypeptide: Large ribosomal subunit protein uL23cz/uL23cy (95 aa).

Belongs to the universal ribosomal protein uL23 family. In terms of assembly, part of the 50S ribosomal subunit.

It is found in the plastid. The protein resides in the chloroplast. In terms of biological role, binds to 23S rRNA. The sequence is that of Large ribosomal subunit protein uL23cz/uL23cy (rpl23-A) from Amborella trichopoda.